A 438-amino-acid chain; its full sequence is GTPase Obg (438 aa).

Residues 1–159 form the Obg domain; sequence MAFRDVLNIE…RRVRLELRLI (159 aa). An OBG-type G domain is found at 160-332; it reads ADVGLVGYPN…LRETLFQLLP (173 aa). ATP-binding positions include 166 to 173, 191 to 195, 219 to 222, 285 to 288, and 313 to 315; these read GYPNAGKS, FTTLS, DIPG, NKVE, and SAK. 2 residues coordinate Mg(2+): serine 173 and threonine 193. Residues 357–435 form the OCT domain; the sequence is IVFREDAPAK…IGTFRFEYFD (79 aa).

The protein belongs to the TRAFAC class OBG-HflX-like GTPase superfamily. OBG GTPase family. Monomer. Mg(2+) serves as cofactor.

It is found in the cytoplasm. Its function is as follows. An essential GTPase which binds GTP, GDP and possibly (p)ppGpp with moderate affinity, with high nucleotide exchange rates and a fairly low GTP hydrolysis rate. Plays a role in control of the cell cycle, stress response, ribosome biogenesis and in those bacteria that undergo differentiation, in morphogenesis control. The chain is GTPase Obg from Deinococcus radiodurans (strain ATCC 13939 / DSM 20539 / JCM 16871 / CCUG 27074 / LMG 4051 / NBRC 15346 / NCIMB 9279 / VKM B-1422 / R1).